Consider the following 506-residue polypeptide: Ribose import ATP-binding protein RbsA 2 (506 aa).

2 ABC transporter domains span residues 7 to 242 (LEMR…VGRP) and 250 to 497 (ERDI…TGVN). 39–46 (GENGAGKS) is a binding site for ATP.

This sequence belongs to the ABC transporter superfamily. Ribose importer (TC 3.A.1.2.1) family. In terms of assembly, the complex is composed of an ATP-binding protein (RbsA), two transmembrane proteins (RbsC) and a solute-binding protein (RbsB).

It localises to the cell inner membrane. The enzyme catalyses D-ribose(out) + ATP + H2O = D-ribose(in) + ADP + phosphate + H(+). In terms of biological role, part of the ABC transporter complex RbsABC involved in ribose import. Responsible for energy coupling to the transport system. The protein is Ribose import ATP-binding protein RbsA 2 of Escherichia coli O157:H7.